A 369-amino-acid chain; its full sequence is Putative 2-aminoethylphosphonate import ATP-binding protein PhnT (369 aa).

The 232-residue stretch at 19–250 (IVLDSLRVAY…PPNRFASEFL (232 aa)) folds into the ABC transporter domain. 51–58 (GPSGSGKT) contributes to the ATP binding site.

Belongs to the ABC transporter superfamily. 2-aminoethylphosphonate importer (TC 3.A.1.11.5) family.

It is found in the cell inner membrane. In terms of biological role, probably part of the PhnSTUV complex (TC 3.A.1.11.5) involved in 2-aminoethylphosphonate import. Probably responsible for energy coupling to the transport system. The chain is Putative 2-aminoethylphosphonate import ATP-binding protein PhnT (phnT) from Salmonella choleraesuis (strain SC-B67).